The primary structure comprises 201 residues: Probable quinol oxidase subunit 3 (201 aa).

Transmembrane regions (helical) follow at residues 20 to 40 (LGFWVFLTAEFSLFGTLFATL), 62 to 82 (LVLIMTFALLISSYTCGIAIY), 91 to 111 (LMLIWMIITVLLGMVFVGFEI), 133 to 153 (FFILLGTHGAHVSLGIVWIIC), and 180 to 200 (FLDVVWIFIFTAVYMIGMVFS).

Belongs to the cytochrome c oxidase subunit 3 family.

It is found in the cell membrane. It carries out the reaction 2 a quinol + O2 = 2 a quinone + 2 H2O. In terms of biological role, catalyzes quinol oxidation with the concomitant reduction of oxygen to water. This chain is Probable quinol oxidase subunit 3 (qoxC), found in Staphylococcus saprophyticus subsp. saprophyticus (strain ATCC 15305 / DSM 20229 / NCIMB 8711 / NCTC 7292 / S-41).